The following is a 93-amino-acid chain: Small ribosomal subunit protein uS19 (93 aa).

Belongs to the universal ribosomal protein uS19 family.

Protein S19 forms a complex with S13 that binds strongly to the 16S ribosomal RNA. The chain is Small ribosomal subunit protein uS19 from Mycobacterium tuberculosis (strain ATCC 25177 / H37Ra).